Consider the following 382-residue polypeptide: MVQAQAAAKEAAAAAIPLMAPYKMGRFELSHRVVLAPLTRCRSYDHVPQPHAALYYSQRATNGGLLISEATGVSATGEGYPEIPGVWTRQQVKAWKPIVDAVHRKGALFFCQLAHVGRASTNDQQPNGQAPISSTDKQITPDDSHTVYSKPRRLRTDEIPHVVDDFRVAARNAIEAGFDGVEIHGAHGYLIDQFMKDSANGRTDQYGGSLENRCRFAVEVIDAVVAEVGADRVGIRLSPYIDFMDCFDSNPEALGSYMVRQLNKHPELLYCHMVEPRMATVEGRRKINHGLLPFRKQFNGTFIASGGYDREEGNKVVDDGYADLVAYGRLFLANPDLPRRFELNAPLNKYDGSTFYTHDPVVGYTDYPFLEEKKEDSATVIV.

FMN is bound by residues 37–39 (PLT), A70, and Q112. The span at 120–138 (STNDQQPNGQAPISSTDKQ) shows a compositional bias: polar residues. The segment at 120-147 (STNDQQPNGQAPISSTDKQITPDDSHTV) is disordered. Position 184–187 (184–187 (HGAH)) interacts with substrate. Catalysis depends on Y189, which acts as the Proton donor. FMN is bound at residue R236. R277 serves as a coordination point for substrate. Residues G307 and 328-329 (GR) each bind FMN.

It belongs to the NADH:flavin oxidoreductase/NADH oxidase family. It depends on FMN as a cofactor.

Its function is as follows. Putative oxophytodienoate reductase that may be involved in the biosynthesis or metabolism of oxylipin signaling molecules. The polypeptide is Putative 12-oxophytodienoate reductase 3 (OPR3) (Oryza sativa subsp. japonica (Rice)).